Reading from the N-terminus, the 422-residue chain is Histidine--tRNA ligase (422 aa).

It belongs to the class-II aminoacyl-tRNA synthetase family. In terms of assembly, homodimer.

Its subcellular location is the cytoplasm. It carries out the reaction tRNA(His) + L-histidine + ATP = L-histidyl-tRNA(His) + AMP + diphosphate + H(+). The polypeptide is Histidine--tRNA ligase (Vibrio parahaemolyticus serotype O3:K6 (strain RIMD 2210633)).